We begin with the raw amino-acid sequence, 256 residues long: uncharacterized protein (256 aa).

The next 3 helical transmembrane spans lie at 42-62 (LIALTVLSNLIIISFVLIWFF), 73-93 (FFTLFIPFFISLLVAIFLIFL), and 108-128 (WLFLWTCVFSSLPIFNLWLIV).

Its subcellular location is the cell membrane. This is an uncharacterized protein from Mycoplasma genitalium (strain ATCC 33530 / DSM 19775 / NCTC 10195 / G37) (Mycoplasmoides genitalium).